A 500-amino-acid chain; its full sequence is MNKFPWLTIIVVLPIFAGSLIFFLPHKGNRVIRWYTICICMLELLLTTYAFCYHFQLDDPLIQLVEDYKWINFFDFRWKLGIDGLSLGPVLLTGFITTLATLAAWPVTRDSRLFHFLMLAMYSGQIGSFSSRDLLLFFIMWELELIPVYLLLSMWGGKKRLYSATKFILYTAGGSIFLLMGVLGVGLYGSNEPTLNFETSVNQSYPVALEIIFYIGFLIAFAVKLPILPLHTWLPDTHGEAHYSTCMLLAGILLKMGAYGLIRINMELLPHAHSIFSPWLMVVGTIQIIYAASTSLGQRNLKKRIAYSSVSHMGFILIGIASITDTGLNGAILQIISHGFIGAALFFLAGTSYDRIRLVYLDEMGGVAIPMPKIFTMFSSFSMASLALPGMSGFVAEVLVFLGIITSQKYLLMPKIAITFVMAIGMILTPIYLLSMSRQIFYGYKLFNTPNSYVFDSGPRELFVSISIFIPVIGIGMYPDFVLSLSVDKVEGILSNYFYR.

14 helical membrane passes run 4–24 (FPWLTIIVVLPIFAGSLIFFL), 35–55 (YTICICMLELLLTTYAFCYHF), 87–107 (LGPVLLTGFITTLATLAAWPV), 113–130 (LFHFLMLAMYSGQIGSFS), 134–154 (LLLFFIMWELELIPVYLLLSM), 167–187 (FILYTAGGSIFLLMGVLGVGL), 207–227 (VALEIIFYIGFLIAFAVKLPI), 242–262 (HYSTCMLLAGILLKMGAYGLI), 272–292 (AHSIFSPWLMVVGTIQIIYAA), 305–325 (IAYSSVSHMGFILIGIASITD), 330–350 (GAILQIISHGFIGAALFFLAG), 386–406 (LALPGMSGFVAEVLVFLGIIT), 416–436 (IAITFVMAIGMILTPIYLLSM), and 462–482 (LFVSISIFIPVIGIGMYPDFV).

The protein belongs to the complex I subunit 4 family.

It localises to the plastid. The protein resides in the chloroplast thylakoid membrane. The enzyme catalyses a plastoquinone + NADH + (n+1) H(+)(in) = a plastoquinol + NAD(+) + n H(+)(out). It carries out the reaction a plastoquinone + NADPH + (n+1) H(+)(in) = a plastoquinol + NADP(+) + n H(+)(out). This is NAD(P)H-quinone oxidoreductase chain 4, chloroplastic from Helianthus annuus (Common sunflower).